A 25-amino-acid polypeptide reads, in one-letter code: Small ribosomal subunit protein uS19 (25 aa).

The interval 1-25 is disordered; it reads GHKLGEFAPTRTFRGHKKEDKKVKR.

Belongs to the universal ribosomal protein uS19 family.

Protein S19 forms a complex with S13 that binds strongly to the 16S ribosomal RNA. This is Small ribosomal subunit protein uS19 (rpsS) from Acholeplasma laidlawii.